The sequence spans 60 residues: Large ribosomal subunit protein bL32 (60 aa).

Belongs to the bacterial ribosomal protein bL32 family.

The polypeptide is Large ribosomal subunit protein bL32 (Latilactobacillus sakei subsp. sakei (strain 23K) (Lactobacillus sakei subsp. sakei)).